Consider the following 702-residue polypeptide: Elongation factor G 2 (702 aa).

The 283-residue stretch at 8 to 290 (ERYRNIGISA…AVIDYLPSPV (283 aa)) folds into the tr-type G domain. GTP-binding positions include 17–24 (AHIDAGKT), 88–92 (DTPGH), and 142–145 (NKMD).

It belongs to the TRAFAC class translation factor GTPase superfamily. Classic translation factor GTPase family. EF-G/EF-2 subfamily.

The protein resides in the cytoplasm. In terms of biological role, catalyzes the GTP-dependent ribosomal translocation step during translation elongation. During this step, the ribosome changes from the pre-translocational (PRE) to the post-translocational (POST) state as the newly formed A-site-bound peptidyl-tRNA and P-site-bound deacylated tRNA move to the P and E sites, respectively. Catalyzes the coordinated movement of the two tRNA molecules, the mRNA and conformational changes in the ribosome. The sequence is that of Elongation factor G 2 from Cupriavidus metallidurans (strain ATCC 43123 / DSM 2839 / NBRC 102507 / CH34) (Ralstonia metallidurans).